Reading from the N-terminus, the 98-residue chain is NADH-ubiquinone oxidoreductase chain 4L (98 aa).

3 helical membrane passes run 1–21 (MSMV…GLLV), 29–49 (SLLC…MAIL), and 61–81 (IILL…LVMV).

Belongs to the complex I subunit 4L family. In terms of assembly, core subunit of respiratory chain NADH dehydrogenase (Complex I) which is composed of 45 different subunits.

It localises to the mitochondrion inner membrane. The catalysed reaction is a ubiquinone + NADH + 5 H(+)(in) = a ubiquinol + NAD(+) + 4 H(+)(out). Core subunit of the mitochondrial membrane respiratory chain NADH dehydrogenase (Complex I) which catalyzes electron transfer from NADH through the respiratory chain, using ubiquinone as an electron acceptor. Part of the enzyme membrane arm which is embedded in the lipid bilayer and involved in proton translocation. The sequence is that of NADH-ubiquinone oxidoreductase chain 4L (MT-ND4L) from Lynx canadensis (Canada lynx).